Reading from the N-terminus, the 316-residue chain is tRNA dimethylallyltransferase (316 aa).

ATP is bound at residue 17–24 (GPTASGKT). Residue 19–24 (TASGKT) coordinates substrate. 4 interaction with substrate tRNA regions span residues 42 to 45 (DSAL), 166 to 170 (QRLSR), 247 to 252 (RCVGYR), and 280 to 287 (KRQITWLR).

This sequence belongs to the IPP transferase family. In terms of assembly, monomer. Requires Mg(2+) as cofactor.

It catalyses the reaction adenosine(37) in tRNA + dimethylallyl diphosphate = N(6)-dimethylallyladenosine(37) in tRNA + diphosphate. In terms of biological role, catalyzes the transfer of a dimethylallyl group onto the adenine at position 37 in tRNAs that read codons beginning with uridine, leading to the formation of N6-(dimethylallyl)adenosine (i(6)A). This is tRNA dimethylallyltransferase from Escherichia coli O6:K15:H31 (strain 536 / UPEC).